Reading from the N-terminus, the 94-residue chain is Co-chaperonin GroES (94 aa).

Belongs to the GroES chaperonin family. In terms of assembly, heptamer of 7 subunits arranged in a ring. Interacts with the chaperonin GroEL.

Its subcellular location is the cytoplasm. In terms of biological role, together with the chaperonin GroEL, plays an essential role in assisting protein folding. The GroEL-GroES system forms a nano-cage that allows encapsulation of the non-native substrate proteins and provides a physical environment optimized to promote and accelerate protein folding. GroES binds to the apical surface of the GroEL ring, thereby capping the opening of the GroEL channel. The protein is Co-chaperonin GroES of Lactobacillus delbrueckii subsp. bulgaricus (strain ATCC BAA-365 / Lb-18).